Here is a 139-residue protein sequence, read N- to C-terminus: ATP synthase epsilon chain (139 aa).

The protein belongs to the ATPase epsilon chain family. In terms of assembly, F-type ATPases have 2 components, CF(1) - the catalytic core - and CF(0) - the membrane proton channel. CF(1) has five subunits: alpha(3), beta(3), gamma(1), delta(1), epsilon(1). CF(0) has three main subunits: a, b and c.

Its subcellular location is the cell inner membrane. Its function is as follows. Produces ATP from ADP in the presence of a proton gradient across the membrane. In Nitrosospira multiformis (strain ATCC 25196 / NCIMB 11849 / C 71), this protein is ATP synthase epsilon chain.